The primary structure comprises 300 residues: Glucose and ribitol dehydrogenase homolog (300 aa).

Residues 1-14 (MASQQFPPQNQETQ) are compositionally biased toward polar residues. The segment at 1 to 23 (MASQQFPPQNQETQPGKEHAMDP) is disordered. 44-68 (IVTGGDSGIGRAVCLCFALEGATVA) provides a ligand contact to NAD(+). Serine 192 is a binding site for substrate. Tyrosine 205 functions as the Proton acceptor in the catalytic mechanism.

This sequence belongs to the short-chain dehydrogenases/reductases (SDR) family.

Functionally, may act as a short alcohol-polyol-sugar dehydrogenase possibly related to carbohydrate metabolism and the acquisition of desiccation tolerance. May also be involved in signal transduction. The chain is Glucose and ribitol dehydrogenase homolog from Oryza sativa subsp. japonica (Rice).